A 305-amino-acid polypeptide reads, in one-letter code: tRNA pseudouridine synthase B (305 aa).

Aspartate 39 acts as the Nucleophile in catalysis.

This sequence belongs to the pseudouridine synthase TruB family. Type 1 subfamily.

The catalysed reaction is uridine(55) in tRNA = pseudouridine(55) in tRNA. In terms of biological role, responsible for synthesis of pseudouridine from uracil-55 in the psi GC loop of transfer RNAs. This chain is tRNA pseudouridine synthase B, found in Staphylococcus aureus (strain MRSA252).